The following is a 466-amino-acid chain: Soluble pyridine nucleotide transhydrogenase (466 aa).

Position 36 to 45 (36 to 45 (ERYQNVGGGC)) interacts with FAD.

It belongs to the class-I pyridine nucleotide-disulfide oxidoreductase family. Requires FAD as cofactor.

Its subcellular location is the cytoplasm. The enzyme catalyses NAD(+) + NADPH = NADH + NADP(+). In terms of biological role, conversion of NADPH, generated by peripheral catabolic pathways, to NADH, which can enter the respiratory chain for energy generation. The sequence is that of Soluble pyridine nucleotide transhydrogenase from Escherichia coli O127:H6 (strain E2348/69 / EPEC).